A 455-amino-acid polypeptide reads, in one-letter code: Mitochondrial distribution and morphology protein 10 (455 aa).

Disordered regions lie at residues 216–249, 278–311, and 377–399; these read WETT…EDAV, IRFS…PSPA, and PRSS…PLGE. Residues 217-227 show a composition bias toward low complexity; that stretch reads ETTNGENGTNT. Residues 228 to 237 show a composition bias toward polar residues; it reads SAPGNASNSR. Positions 291 to 301 are enriched in pro residues; the sequence is AQIPPPSPFTP.

This sequence belongs to the MDM10 family. As to quaternary structure, component of the ER-mitochondria encounter structure (ERMES) or MDM complex, composed of MMM1, MDM10, MDM12 and MDM34. Associates with the mitochondrial outer membrane sorting assembly machinery SAM(core) complex.

The protein localises to the mitochondrion outer membrane. Functionally, component of the ERMES/MDM complex, which serves as a molecular tether to connect the endoplasmic reticulum and mitochondria. Components of this complex are involved in the control of mitochondrial shape and protein biogenesis and may function in phospholipid exchange. MDM10 is involved in the late assembly steps of the general translocase of the mitochondrial outer membrane (TOM complex). Functions in the TOM40-specific route of the assembly of outer membrane beta-barrel proteins, including the association of TOM40 with the receptor TOM22 and small TOM proteins. Can associate with the SAM(core) complex as well as the MDM12-MMM1 complex, both involved in late steps of the major beta-barrel assembly pathway, that is responsible for biogenesis of all outer membrane beta-barrel proteins. May act as a switch that shuttles between both complexes and channels precursor proteins into the TOM40-specific pathway. Plays a role in mitochondrial morphology and in the inheritance of mitochondria. The polypeptide is Mitochondrial distribution and morphology protein 10 (Coprinopsis cinerea (strain Okayama-7 / 130 / ATCC MYA-4618 / FGSC 9003) (Inky cap fungus)).